A 310-amino-acid chain; its full sequence is N-acetyl-gamma-glutamyl-phosphate reductase (310 aa).

Cysteine 117 is a catalytic residue.

Belongs to the NAGSA dehydrogenase family. Type 2 subfamily.

Its subcellular location is the cytoplasm. It catalyses the reaction N-acetyl-L-glutamate 5-semialdehyde + phosphate + NADP(+) = N-acetyl-L-glutamyl 5-phosphate + NADPH + H(+). The protein operates within amino-acid biosynthesis; L-arginine biosynthesis; N(2)-acetyl-L-ornithine from L-glutamate: step 3/4. Catalyzes the NADPH-dependent reduction of N-acetyl-5-glutamyl phosphate to yield N-acetyl-L-glutamate 5-semialdehyde. This Brucella abortus (strain S19) protein is N-acetyl-gamma-glutamyl-phosphate reductase.